The following is a 515-amino-acid chain: MAKRPLQTEANVERLPSELKRRKKKNSLKVTPGTVIGQNSKSRRNVPGMDDGNDKRASDSRYLPTPELSALPQSTIDEYLSSNSIHIADPSTDPSLRPITSFSFLPESSNDLYLPLEKFSSPTPIQAVSWPLAFAGRDLIGVAETGSGKTLAFGLPCLRRVLELNNSETSCKPCALIITPTRELAVQIYDQLLRFSSAVDVGIACIYGGSPKDHQRREIRNASVVIATPGRLKDFQADQTINLSGVKYLVLDEADRMLDKGFEQDIQDIVKGIPSTQKRQTIMFTATWPIGVRNLAASFTKNPVTVTIGDSSDIRANKRIKQMVEVLQPYEKDSRLLELLRRYQDGGKNNHRILVFCLYKKEAMRVERFIGSKGFKVAGIHGDMSQTERFRSLEAFKSGSISLLVATDVAARGLDIPAVKLVLNVTFPLTIEDYVHRIGRTGRAGAEGLAITLFTERDKALSGPLINVLRAADQDVPESLLKFGATVKKKQHESYGAFFREMDTTKVASRIKFED.

A disordered region spans residues M1–E67. The Q motif signature appears at T100 to A127. In terms of domain architecture, Helicase ATP-binding spans W130–V306. A143–T150 is a binding site for ATP. Residues D252–D255 carry the DEAD box motif. One can recognise a Helicase C-terminal domain in the interval R335–G484.

Belongs to the DEAD box helicase family. DDX5/DBP2 subfamily.

It localises to the nucleus. The protein localises to the nucleolus. It carries out the reaction ATP + H2O = ADP + phosphate + H(+). ATP-dependent RNA helicase required for 60S ribosomal subunit synthesis. Involved in efficient pre-rRNA processing, predominantly at site A3, which is necessary for the normal formation of 25S and 5.8S rRNAs. The sequence is that of ATP-dependent RNA helicase DBP3 (DBP3) from Coccidioides immitis (strain RS) (Valley fever fungus).